The primary structure comprises 29 residues: Amelogenin-like protein (29 aa).

Residue S16 is modified to Phosphoserine.

It belongs to the amelogenin family.

The protein resides in the secreted. Its subcellular location is the extracellular space. The protein localises to the extracellular matrix. Tooth enamel proteins are produced in ameloblasts and play a role in biomineralization. In Oryctolagus cuniculus (Rabbit), this protein is Amelogenin-like protein (AMEL).